The sequence spans 181 residues: UPF0397 protein SUB0313 (181 aa).

5 helical membrane-spanning segments follow: residues 11–31 (AIGI…ITIF), 45–65 (LFSV…GHML), 69–89 (FAGY…GLGI), 114–134 (VQAL…DILI), and 147–167 (LFAA…LLIA).

This sequence belongs to the UPF0397 family.

It is found in the cell membrane. The sequence is that of UPF0397 protein SUB0313 from Streptococcus uberis (strain ATCC BAA-854 / 0140J).